We begin with the raw amino-acid sequence, 311 residues long: Putative dihydroorotate dehydrogenase A (fumarate) (311 aa).

Residues lysine 45, 69 to 73 (NSMGL), and asparagine 128 each bind substrate. 45–46 (KT) lines the FMN pocket. An FMN-binding site is contributed by asparagine 128. Cysteine 131 functions as the Nucleophile in the catalytic mechanism. Lysine 165 and valine 193 together coordinate FMN. 194–195 (NS) lines the substrate pocket. FMN is bound by residues glycine 220, 248–249 (GG), and 270–271 (GT).

It belongs to the dihydroorotate dehydrogenase family. Type 1 subfamily. As to quaternary structure, homodimer. FMN serves as cofactor.

Its subcellular location is the cytoplasm. It carries out the reaction (S)-dihydroorotate + fumarate = orotate + succinate. It participates in pyrimidine metabolism; UMP biosynthesis via de novo pathway. Catalyzes the conversion of dihydroorotate to orotate with fumarate as the electron acceptor. The protein is Putative dihydroorotate dehydrogenase A (fumarate) (pyrD) of Streptococcus equi subsp. equi (strain 4047).